We begin with the raw amino-acid sequence, 294 residues long: PAK4-inhibitor INKA2 (294 aa).

Disordered regions lie at residues 50 to 143 (ISGG…STLM), 170 to 198 (PELE…RELG), and 223 to 290 (LKEK…DINT). Residues 85–99 (SPSNQASLGSTSSGK) show a composition bias toward polar residues. The segment at 134 to 177 (EPDDWTSTLMSRGRNRQPLVLGDNVFADLVGNWLDLPELEKGGE) is inka box. A compositionally biased stretch (basic and acidic residues) spans 171–198 (ELEKGGEKGETGEAGEPKGGRGQPRELG). Residues 241–253 (RSQKVKKRSHSKG) show a composition bias toward basic residues.

This sequence belongs to the INKA family. Interacts with PAK4.

It is found in the nucleus. Its function is as follows. Inhibitor of the serine/threonine-protein kinase PAK4. Acts by binding PAK4 in a substrate-like manner, inhibiting the protein kinase activity. In Bos taurus (Bovine), this protein is PAK4-inhibitor INKA2.